We begin with the raw amino-acid sequence, 255 residues long: Hydroxyacylglutathione hydrolase (255 aa).

Zn(2+) is bound by residues H52, H54, D56, H57, H108, D130, and H168.

Belongs to the metallo-beta-lactamase superfamily. Glyoxalase II family. As to quaternary structure, monomer. The cofactor is Zn(2+).

It carries out the reaction an S-(2-hydroxyacyl)glutathione + H2O = a 2-hydroxy carboxylate + glutathione + H(+). It participates in secondary metabolite metabolism; methylglyoxal degradation; (R)-lactate from methylglyoxal: step 2/2. In terms of biological role, thiolesterase that catalyzes the hydrolysis of S-D-lactoyl-glutathione to form glutathione and D-lactic acid. This Albidiferax ferrireducens (strain ATCC BAA-621 / DSM 15236 / T118) (Rhodoferax ferrireducens) protein is Hydroxyacylglutathione hydrolase.